Consider the following 501-residue polypeptide: UDP-N-acetylmuramoyl-L-alanyl-D-glutamate--2,6-diaminopimelate ligase (501 aa).

Residues L26, S28, and 43–45 (HQC) contribute to the UDP-N-acetyl-alpha-D-muramoyl-L-alanyl-D-glutamate site. 123 to 129 (GTNGKTT) lines the ATP pocket. UDP-N-acetyl-alpha-D-muramoyl-L-alanyl-D-glutamate-binding positions include N164, 165 to 166 (TT), S192, Q198, and R200. K232 carries the N6-carboxylysine modification. Residues R398, 422–425 (DNPR), G473, and E477 each bind meso-2,6-diaminopimelate. The Meso-diaminopimelate recognition motif motif lies at 422-425 (DNPR).

Belongs to the MurCDEF family. MurE subfamily. It depends on Mg(2+) as a cofactor. Carboxylation is probably crucial for Mg(2+) binding and, consequently, for the gamma-phosphate positioning of ATP.

The protein resides in the cytoplasm. The catalysed reaction is UDP-N-acetyl-alpha-D-muramoyl-L-alanyl-D-glutamate + meso-2,6-diaminopimelate + ATP = UDP-N-acetyl-alpha-D-muramoyl-L-alanyl-gamma-D-glutamyl-meso-2,6-diaminopimelate + ADP + phosphate + H(+). It functions in the pathway cell wall biogenesis; peptidoglycan biosynthesis. Its function is as follows. Catalyzes the addition of meso-diaminopimelic acid to the nucleotide precursor UDP-N-acetylmuramoyl-L-alanyl-D-glutamate (UMAG) in the biosynthesis of bacterial cell-wall peptidoglycan. The protein is UDP-N-acetylmuramoyl-L-alanyl-D-glutamate--2,6-diaminopimelate ligase of Haemophilus ducreyi (strain 35000HP / ATCC 700724).